We begin with the raw amino-acid sequence, 449 residues long: Trigger factor (449 aa).

One can recognise a PPIase FKBP-type domain in the interval Gly174–Pro261. Residues Glu430–Ala449 form a disordered region. Residues Lys437 to Ala449 show a composition bias toward basic and acidic residues.

Belongs to the FKBP-type PPIase family. Tig subfamily.

The protein resides in the cytoplasm. The enzyme catalyses [protein]-peptidylproline (omega=180) = [protein]-peptidylproline (omega=0). In terms of biological role, involved in protein export. Acts as a chaperone by maintaining the newly synthesized protein in an open conformation. Functions as a peptidyl-prolyl cis-trans isomerase. This Synechococcus sp. (strain CC9311) protein is Trigger factor.